We begin with the raw amino-acid sequence, 113 residues long: Hydrogenase maturation factor HypA (113 aa).

Histidine 2 provides a ligand contact to Ni(2+). 4 residues coordinate Zn(2+): cysteine 70, cysteine 73, cysteine 86, and cysteine 88.

Belongs to the HypA/HybF family.

Its function is as follows. Involved in the maturation of [NiFe] hydrogenases. Required for nickel insertion into the metal center of the hydrogenase. This is Hydrogenase maturation factor HypA from Nostoc punctiforme (strain ATCC 29133 / PCC 73102).